Consider the following 1097-residue polypeptide: Chitin synthase 2 (1097 aa).

The segment at 1–46 (MAGYGHSTAGGFGSGSGSGPPGPQYMLPQYDEGDDPDADATPAGQG) is disordered. Residues 1–748 (MAGYGHSTAG…HVEFLYHLLQ (748 aa)) are Extracellular-facing. Residues 8-19 (TAGGFGSGSGSG) show a composition bias toward gly residues. Asparagine 55 carries an N-linked (GlcNAc...) asparagine glycan. 2 disordered regions span residues 148 to 217 (SGHG…YPRY) and 259 to 322 (SSQI…RPPQ). The segment covering 284 to 296 (STTYSSNTGTSAS) has biased composition (polar residues). A compositionally biased stretch (basic and acidic residues) spans 299-313 (DKFEHYGPIPEEGKH). Residues asparagine 416 and asparagine 424 are each glycosylated (N-linked (GlcNAc...) asparagine). A helical membrane pass occupies residues 749–769 (LLFTYFSLANFYLAFYFIAGG). Topologically, residues 770-786 (LADPHVDPFNSDGHVAR) are cytoplasmic. Residues 787-807 (IIFNILRYVCVLLICTQFILS) traverse the membrane as a helical segment. At 808 to 821 (LGNRPQGAKRMYLA) the chain is on the extracellular side. A helical transmembrane segment spans residues 822–842 (SMIIYAVIMVYTTFATIFIVV). The Cytoplasmic portion of the chain corresponds to 843 to 865 (RQIQPSQKSDDKPDLELGNNVFT). A helical transmembrane segment spans residues 866–886 (NLIVSVASTLGLYFVMSFLYL). Residues 887-894 (DPWHMFTS) are Extracellular-facing. Residues 895–915 (AIQYFVLLPSYICTLQIYAFC) traverse the membrane as a helical segment. The Cytoplasmic portion of the chain corresponds to 916 to 993 (NTHDVTWGTK…QDYYKSVRTY (78 aa)). A helical transmembrane segment spans residues 994-1014 (MVVSWMVANATLAMAVSEAYG). Residues 1015–1025 (DSEIGDNFYLR) are Extracellular-facing. Residues 1026–1046 (FILWAVAALALFRALGSTTFA) form a helical membrane-spanning segment. Topologically, residues 1047–1097 (AINLVSALVEGRVRLRLNMKGFRWIKEKWGDADVKGKFEGLGDRARGLARR) are cytoplasmic.

Belongs to the chitin synthase family.

Its subcellular location is the cell membrane. It catalyses the reaction [(1-&gt;4)-N-acetyl-beta-D-glucosaminyl](n) + UDP-N-acetyl-alpha-D-glucosamine = [(1-&gt;4)-N-acetyl-beta-D-glucosaminyl](n+1) + UDP + H(+). Polymerizes chitin, a structural polymer of the cell wall and septum, by transferring the sugar moiety of UDP-GlcNAc to the non-reducing end of the growing chitin polymer. In Neurospora crassa (strain ATCC 24698 / 74-OR23-1A / CBS 708.71 / DSM 1257 / FGSC 987), this protein is Chitin synthase 2 (chs-2).